The chain runs to 121 residues: MVKRTGPTDINLRRLIRTLRKKSNEEGVKIWKDIAWRLERPRRQRAEVNISKINRYTKEGDVVIVPGSVLGAGRLEHKVVVAAWKFSEAARRKIIEAGGEAISIEELMERNPKGSGVIIME.

This sequence belongs to the eukaryotic ribosomal protein eL18 family. In terms of assembly, part of the 50S ribosomal subunit.

The chain is Large ribosomal subunit protein eL18 from Thermococcus kodakarensis (strain ATCC BAA-918 / JCM 12380 / KOD1) (Pyrococcus kodakaraensis (strain KOD1)).